A 201-amino-acid polypeptide reads, in one-letter code: Large ribosomal subunit protein uL4 (201 aa).

Residues 46 to 71 are disordered; that stretch reads QKTRAEVVGSGKKPWRQKGTGRARAG.

It belongs to the universal ribosomal protein uL4 family. In terms of assembly, part of the 50S ribosomal subunit.

Functionally, one of the primary rRNA binding proteins, this protein initially binds near the 5'-end of the 23S rRNA. It is important during the early stages of 50S assembly. It makes multiple contacts with different domains of the 23S rRNA in the assembled 50S subunit and ribosome. Forms part of the polypeptide exit tunnel. In Shewanella piezotolerans (strain WP3 / JCM 13877), this protein is Large ribosomal subunit protein uL4.